A 585-amino-acid polypeptide reads, in one-letter code: MGRIIRVTGPLVVADDMKGAKMYEVVRVGEMGLIGEIIRLEGDKAVIQVYEETAGIRPGEPVEGTGASLSVELGPGLLTAMYDGIQRPLEVLRELSGDFIARGLTAPALPRDKKWHFTPKVKVGDKVVGGDILGVVPETGIIEHRVLVPPWVEGEIVEIVEEGDYTIEEVIAKVKKPNGEIEELKMYHRWPVRVKRPYKRKLPPEVPLITGQRTIDTFFSQAKGGTAAIPGPFGSGKTVTQHQLAKWSDAQVVVYIGCGERGNEMTDVLEEFPKLKDPKTGKPLMERTVLIANTSNMPVAAREASIYTGITIAEYFRDMGYDVALMADSTSRWAEALREISGRLEEMPGEEGYPAYLASKIAEFYERAGRVITLGSDERIGSVSVIGAVSPPGGDFSEPVVQNTLRVVKVFWALDADLARRRHFPAINWLRSYSLYIDSIQDWWHKNVDPEWRAMRDRAMELLQKEAELQEIVRIVGPDALPDREKAVLIVARMLREDYLQQDAFDEVDTYCPPKKQVTMMRVILNFYERTMEAVDRGVPVDEIAKLPVREKIGRMKFEPEIEKVAALIDETNAQFEELFKKYGA.

231–238 (GPFGSGKT) serves as a coordination point for ATP.

The protein belongs to the ATPase alpha/beta chains family. In terms of assembly, has multiple subunits with at least A(3), B(3), C, D, E, F, H, I and proteolipid K(x).

It localises to the cell membrane. It catalyses the reaction ATP + H2O + 4 H(+)(in) = ADP + phosphate + 5 H(+)(out). In terms of biological role, component of the A-type ATP synthase that produces ATP from ADP in the presence of a proton gradient across the membrane. The A chain is the catalytic subunit. This chain is A-type ATP synthase subunit A, found in Thermococcus onnurineus (strain NA1).